The sequence spans 241 residues: Pyridoxal phosphate phosphatase PHOSPHO2 (241 aa).

D8 serves as the catalytic Nucleophile. Residues D8 and D10 each coordinate Mg(2+). D10 serves as the catalytic Proton donor. D19 and D99 together coordinate substrate. D179 is a binding site for Mg(2+).

Belongs to the HAD-like hydrolase superfamily. PHOSPHO family. Requires Mg(2+) as cofactor.

The enzyme catalyses pyridoxal 5'-phosphate + H2O = pyridoxal + phosphate. Phosphatase that has high activity toward pyridoxal 5'-phosphate (PLP). Also active at much lower level toward pyrophosphate, phosphoethanolamine (PEA), phosphocholine (PCho), phospho-l-tyrosine, fructose-6-phosphate, p-nitrophenyl phosphate, and h-glycerophosphate. The protein is Pyridoxal phosphate phosphatase PHOSPHO2 (Phospho2) of Mus musculus (Mouse).